A 313-amino-acid polypeptide reads, in one-letter code: WUSCHEL-related homeobox 5 (313 aa).

Residues 1 to 32 (METTTTTLGGGGGGRAGGFSDPPSPLSPPLSP) form a disordered region. A compositionally biased stretch (gly residues) spans 8-17 (LGGGGGGRAG). Pro residues predominate over residues 22–31 (PPSPLSPPLS). The homeobox; WUS-type DNA-binding region spans 40 to 104 (LANARWTPTK…NHKARQRQKQ (65 aa)). Disordered stretches follow at residues 224-247 (AAGR…GRET) and 271-313 (CAAV…SGGR). Over residues 271-301 (CAAVSPTTPSASASFSWESESSDSPSSEAPP) the composition is skewed to low complexity.

This sequence belongs to the WUS homeobox family.

It is found in the nucleus. Functionally, transcription factor which may be involved in developmental processes. The sequence is that of WUSCHEL-related homeobox 5 (WOX5) from Oryza sativa subsp. japonica (Rice).